We begin with the raw amino-acid sequence, 585 residues long: Urease subunit alpha (585 aa).

Residues 132–585 form the Urease domain; that stretch reads GGIDTHIHFI…LPMAQRYFLF (454 aa). The Ni(2+) site is built by His-137, His-139, and Lys-220. Lys-220 carries the post-translational modification N6-carboxylysine. His-222 is a binding site for substrate. Residues His-249 and His-275 each coordinate Ni(2+). The active-site Proton donor is the His-323. Asp-363 is a Ni(2+) binding site.

This sequence belongs to the metallo-dependent hydrolases superfamily. Urease alpha subunit family. Heterotrimer of UreA (gamma), UreB (beta) and UreC (alpha) subunits. Three heterotrimers associate to form the active enzyme. Requires Ni cation as cofactor. Post-translationally, carboxylation allows a single lysine to coordinate two nickel ions.

Its subcellular location is the cytoplasm. The catalysed reaction is urea + 2 H2O + H(+) = hydrogencarbonate + 2 NH4(+). It functions in the pathway nitrogen metabolism; urea degradation; CO(2) and NH(3) from urea (urease route): step 1/1. The sequence is that of Urease subunit alpha from Pseudarthrobacter chlorophenolicus (strain ATCC 700700 / DSM 12829 / CIP 107037 / JCM 12360 / KCTC 9906 / NCIMB 13794 / A6) (Arthrobacter chlorophenolicus).